Reading from the N-terminus, the 337-residue chain is Tert-butanol monooxygenase / tert-amyl alcohol desaturase reductase subunit (337 aa).

One can recognise an FAD-binding FR-type domain in the interval 9–114 (KYPKTALNLR…GHPRNNFPLI (106 aa)). In terms of domain architecture, 2Fe-2S ferredoxin-type spans 254-337 (FQIKIASTGT…SKGATLVLDL (84 aa)). The [2Fe-2S] cluster site is built by Cys-288, Cys-293, Cys-296, and Cys-324.

Belongs to the PDR/VanB family. This two-component enzyme is composed of an oxygenase (MdpJ) and a reductase (MdpK). It depends on [2Fe-2S] cluster as a cofactor.

Reductase component of a two-component system involved in the degradation of tertiary alcohols such as tert-butyl alcohol (TBA) and tert-amyl alcohol (TAA). MdpK probably provides electrons via its [2Fe-2S] iron-sulfur cluster to the MdpJ oxygenase subunit. The chain is Tert-butanol monooxygenase / tert-amyl alcohol desaturase reductase subunit from Aquincola tertiaricarbonis.